Consider the following 693-residue polypeptide: Glycine--tRNA ligase beta subunit (693 aa).

It belongs to the class-II aminoacyl-tRNA synthetase family. In terms of assembly, tetramer of two alpha and two beta subunits.

It is found in the cytoplasm. It carries out the reaction tRNA(Gly) + glycine + ATP = glycyl-tRNA(Gly) + AMP + diphosphate. The polypeptide is Glycine--tRNA ligase beta subunit (glyS) (Halalkalibacterium halodurans (strain ATCC BAA-125 / DSM 18197 / FERM 7344 / JCM 9153 / C-125) (Bacillus halodurans)).